Consider the following 392-residue polypeptide: Adenine nucleotide transporter BT1, chloroplastic/mitochondrial (392 aa).

Solcar repeat units follow at residues 108-191 (NPSL…VNKK), 202-286 (IPIP…LRKA), and 296-384 (IGNI…CKKI). The next 6 membrane-spanning stretches (helical) occupy residues 113–133 (RLLS…PLET), 168–188 (LVNV…FETV), 204–224 (IPAS…LTYP), 263–283 (APSL…YDSL), 302–322 (LLIG…LEVA), and 359–379 (GLGP…MCYE).

The protein belongs to the mitochondrial carrier (TC 2.A.29) family. As to expression, expressed in root tips, the central cylinder of young roots, and maturating and germinating pollen.

Its subcellular location is the plastid. It localises to the chloroplast inner membrane. It is found in the mitochondrion inner membrane. Inhibited by pyridoxal 5-phosphate but not mersalyl. In terms of biological role, probable mitochondrial adenylate carrier that catalyzes the transport of ATP, ADP and AMP, but not ADP-glucose. Recombinant BT1 shows a unidirectional mode of transport in intact E.coli cells. May function as a plastidial nucleotide uniport carrier required to export newly synthesized adenylates into the cytosol. May be involved in abiotic stress response. This chain is Adenine nucleotide transporter BT1, chloroplastic/mitochondrial (BT1), found in Arabidopsis thaliana (Mouse-ear cress).